We begin with the raw amino-acid sequence, 174 residues long: Ribosome maturation factor RimP (174 aa).

The protein belongs to the RimP family.

The protein resides in the cytoplasm. Required for maturation of 30S ribosomal subunits. The chain is Ribosome maturation factor RimP from Acinetobacter baylyi (strain ATCC 33305 / BD413 / ADP1).